Consider the following 134-residue polypeptide: Small ribosomal subunit protein uS9 (134 aa).

Positions 109–134 (DARRTEPHKPSKSSKGPRAKRQKSYR) are disordered. Positions 118 to 134 (PSKSSKGPRAKRQKSYR) are enriched in basic residues.

The protein belongs to the universal ribosomal protein uS9 family.

This chain is Small ribosomal subunit protein uS9, found in Methanococcus maripaludis (strain DSM 14266 / JCM 13030 / NBRC 101832 / S2 / LL).